The following is a 722-amino-acid chain: Inactive serine protease PAMR1 (722 aa).

The first 21 residues, Met1 to Ala21, serve as a signal peptide directing secretion. Residue Asn98 is glycosylated (N-linked (GlcNAc...) asparagine). 8 cysteine pairs are disulfide-bonded: Cys130/Cys152, Cys179/Cys201, Cys241/Cys252, Cys246/Cys262, Cys264/Cys273, Cys282/Cys331, Cys317/Cys344, and Cys416/Cys444. One can recognise a CUB domain in the interval Cys130–Val238. Residues Glu237–Glu274 form the EGF-like domain. Sushi domains follow at residues Lys280–Lys346 and Lys393–Pro446. Asn318 carries an N-linked (GlcNAc...) asparagine glycan. The 276-residue stretch at Ile447–Lys722 folds into the Peptidase S1 domain. A glycan (N-linked (GlcNAc...) asparagine) is linked at Asn455. Residues Cys491 and Cys507 are joined by a disulfide bond. Asn616 carries an N-linked (GlcNAc...) asparagine glycan. 2 disulfides stabilise this stretch: Cys632–Cys651 and Cys663–Cys699.

It belongs to the peptidase S1 family.

The protein localises to the secreted. Functionally, may play a role in regeneration of skeletal muscle. This chain is Inactive serine protease PAMR1 (pamr1), found in Xenopus tropicalis (Western clawed frog).